A 171-amino-acid chain; its full sequence is CASP-like protein 1C3 (171 aa).

Residues 1–6 (MVKPKR) are Cytoplasmic-facing. The helical transmembrane segment at 7 to 27 (LLSLLLRLIAFGATLAAVIIM) threads the bilayer. The Extracellular portion of the chain corresponds to 28–52 (ATSHEKGSFFALSYEAKYSDTPAFK). The helical transmembrane segment at 53–73 (YFVIANAIVTVYGFLALFIPS) threads the bilayer. At 74–79 (ESPLWR) the chain is on the cytoplasmic side. A helical membrane pass occupies residues 80-100 (LVLALDLVFTMLLISSISAAL). Topologically, residues 101-130 (AVAQVGKKGNSSAGWLPVCGQVTKYCNQVT) are extracellular. N-linked (GlcNAc...) asparagine glycosylation is present at Asn-110. Residues 131–151 (GALVAGFIAIITYIILLLYSI) form a helical membrane-spanning segment. At 152-171 (YTFLNSLLGKTPCRLSSPGI) the chain is on the cytoplasmic side.

The protein belongs to the Casparian strip membrane proteins (CASP) family. In terms of assembly, homodimer and heterodimers.

It localises to the cell membrane. The polypeptide is CASP-like protein 1C3 (Populus trichocarpa (Western balsam poplar)).